The chain runs to 284 residues: L-fucose dehydrogenase (284 aa).

NAD(+) is bound by residues Arg-19, Ile-21, Asp-40, Lys-41, Asp-62, Val-63, Asn-89, Tyr-154, Lys-158, Ile-187, Thr-189, and Leu-191.

Belongs to the short-chain dehydrogenases/reductases (SDR) family.

It carries out the reaction L-fucose + NAD(+) = L-fucono-1,5-lactone + NADH + H(+). It catalyses the reaction D-arabinose + NAD(+) = D-arabinono-1,5-lactone + NADH + H(+). The catalysed reaction is L-galactose + NAD(+) = L-galactono-1,5-lactone + NADH + H(+). It functions in the pathway carbohydrate degradation; L-fucose degradation. In terms of biological role, catalyzes the NAD(+)-dependent oxidation of L-fucose, yielding L-fucono-1,5-lactone, which rapidly converts spontaneously to L-fucone-1,4-lactone. Can also act on D-arabinose and L-galactose, with lower catalytic efficiency. Does not use NADPH. May be the initial enzyme of the putative L-fucose degradation pathway in mammals. This is L-fucose dehydrogenase (HSD17B14) from Oryctolagus cuniculus (Rabbit).